We begin with the raw amino-acid sequence, 907 residues long: Probable ubiquitin-conjugating enzyme E2 24 (907 aa).

2 disordered regions span residues 1–23 (MEMSLTDSDWDSSSDSGSSEHEE) and 485–509 (SSTVSSEGSVQDLSQKISQSDEASS). Over residues 495–509 (QDLSQKISQSDEASS) the composition is skewed to polar residues. The region spanning 662 to 822 (SWVKKVQQEW…AFLITCKSMI (161 aa)) is the UBC core domain. The Glycyl thioester intermediate role is filled by C748.

It belongs to the ubiquitin-conjugating enzyme family. Interacts with PHO1. Interacts with NLA. Expressed in the vascular tissues of cotyledons, leaves, roots, sepals, filaments, anthers and junctions between the inflorescence stems and siliques.

Its subcellular location is the golgi apparatus membrane. The protein resides in the endoplasmic reticulum membrane. It carries out the reaction S-ubiquitinyl-[E1 ubiquitin-activating enzyme]-L-cysteine + [E2 ubiquitin-conjugating enzyme]-L-cysteine = [E1 ubiquitin-activating enzyme]-L-cysteine + S-ubiquitinyl-[E2 ubiquitin-conjugating enzyme]-L-cysteine.. Its pathway is protein modification; protein ubiquitination. Functionally, E2 ubiquitin-protein ligase that mediates E1-dependent protein ubiquitination. Mediates PHO1 degradation through multivesicular body-mediated vacuolar proteolysis in response to inorganic phosphate (Pi) availability. Negatively regulates the protein abundance of PHF1 and PHT1s under Pi-sufficient conditions by facilitating the degradation of PHT1 proteins at the endomembrane. Functions cooperatively with NLA to regulate the abundance of the inorganic phosphate (Pi) transporters PHT1-1, PHT1-2 and PHT1-3 in different subcellular compartments. Regulates Pi homeostasis by mediating, cooperatively with NLA, polyubiquitination of PHT1-4 and its targeting for degradation. The protein is Probable ubiquitin-conjugating enzyme E2 24 of Arabidopsis thaliana (Mouse-ear cress).